Here is a 187-residue protein sequence, read N- to C-terminus: Thermosensitive gluconokinase (187 aa).

Residue 10–17 (GVSGSGKT) coordinates ATP.

The protein belongs to the gluconokinase GntK/GntV family.

The enzyme catalyses D-gluconate + ATP = 6-phospho-D-gluconate + ADP + H(+). The protein operates within carbohydrate acid metabolism; L-idonate degradation. The protein is Thermosensitive gluconokinase (idnK) of Escherichia coli (strain K12).